An 83-amino-acid chain; its full sequence is MVTIRLARGGAKKRPFYNIVVADSRNARDGRFIERVGFFNPLARGQEETLRLDLDRVEHWVATGAATSDRVAKLIKDARKATA.

The protein belongs to the bacterial ribosomal protein bS16 family.

This chain is Small ribosomal subunit protein bS16, found in Shewanella denitrificans (strain OS217 / ATCC BAA-1090 / DSM 15013).